Here is a 288-residue protein sequence, read N- to C-terminus: Acetyl-coenzyme A carboxylase carboxyl transferase subunit beta (288 aa).

The CoA carboxyltransferase N-terminal domain maps to 34–288; it reads LFAKCPACKH…HLVAFHGGGQ (255 aa). Residues Cys-38, Cys-41, Cys-56, and Cys-59 each coordinate Zn(2+). The segment at 38 to 59 adopts a C4-type zinc-finger fold; sequence CPACKHMIYKKDLGLAKICPTC.

This sequence belongs to the AccD/PCCB family. As to quaternary structure, acetyl-CoA carboxylase is a heterohexamer composed of biotin carboxyl carrier protein (AccB), biotin carboxylase (AccC) and two subunits each of ACCase subunit alpha (AccA) and ACCase subunit beta (AccD). Zn(2+) serves as cofactor.

Its subcellular location is the cytoplasm. The enzyme catalyses N(6)-carboxybiotinyl-L-lysyl-[protein] + acetyl-CoA = N(6)-biotinyl-L-lysyl-[protein] + malonyl-CoA. The protein operates within lipid metabolism; malonyl-CoA biosynthesis; malonyl-CoA from acetyl-CoA: step 1/1. Component of the acetyl coenzyme A carboxylase (ACC) complex. Biotin carboxylase (BC) catalyzes the carboxylation of biotin on its carrier protein (BCCP) and then the CO(2) group is transferred by the transcarboxylase to acetyl-CoA to form malonyl-CoA. The polypeptide is Acetyl-coenzyme A carboxylase carboxyl transferase subunit beta (Streptococcus pyogenes serotype M3 (strain ATCC BAA-595 / MGAS315)).